A 141-amino-acid polypeptide reads, in one-letter code: Hemoglobin subunit alpha (141 aa).

The Globin domain occupies 1 to 141 (VLSAADKTNV…VATVLTSKYR (141 aa)). A Phosphoserine modification is found at serine 3. An N6-succinyllysine modification is found at lysine 7. Threonine 8 is modified (phosphothreonine). Position 11 is an N6-succinyllysine (lysine 11). The residue at position 16 (lysine 16) is an N6-acetyllysine; alternate. Lysine 16 is subject to N6-succinyllysine; alternate. Position 24 is a phosphotyrosine (tyrosine 24). Position 35 is a phosphoserine (serine 35). The residue at position 40 (lysine 40) is an N6-succinyllysine. Serine 49 carries the post-translational modification Phosphoserine. Residue histidine 58 participates in O2 binding. Heme b is bound at residue histidine 87. Position 102 is a phosphoserine (serine 102). Position 108 is a phosphothreonine (threonine 108). Serine 124 bears the Phosphoserine mark. 2 positions are modified to phosphothreonine: threonine 134 and threonine 137. Phosphoserine is present on serine 138.

This sequence belongs to the globin family. As to quaternary structure, heterotetramer of two alpha chains and two beta chains. As to expression, red blood cells.

In terms of biological role, involved in oxygen transport from the lung to the various peripheral tissues. Its function is as follows. Hemopressin acts as an antagonist peptide of the cannabinoid receptor CNR1. Hemopressin-binding efficiently blocks cannabinoid receptor CNR1 and subsequent signaling. This is Hemoglobin subunit alpha (HBA) from Ctenodactylus gundi (Northern gundi).